The sequence spans 154 residues: Homeobox protein engrailed (154 aa).

The homeobox DNA-binding region spans 37 to 96 (EKRPRTAFSASQLQRLKQEFQQSNYLTEQRRRSLAKELTLSESQIKIWFQNKRAKIKKAS). Positions 127–154 (KLLNGQNTSGDCSRSDYTSDSDGDSLTH) are disordered. Positions 129–144 (LNGQNTSGDCSRSDYT) are enriched in polar residues. A compositionally biased stretch (acidic residues) spans 145–154 (SDSDGDSLTH).

Belongs to the engrailed homeobox family.

The protein resides in the nucleus. The protein is Homeobox protein engrailed (EN) of Tripneustes gratilla (Hawaian sea urchin).